A 158-amino-acid chain; its full sequence is Ribosome maturation factor RimP (158 aa).

It belongs to the RimP family.

It is found in the cytoplasm. In terms of biological role, required for maturation of 30S ribosomal subunits. This chain is Ribosome maturation factor RimP, found in Lactobacillus acidophilus (strain ATCC 700396 / NCK56 / N2 / NCFM).